The following is a 378-amino-acid chain: Peptide chain release factor RF2 (378 aa).

Q253 bears the N5-methylglutamine mark.

It belongs to the prokaryotic/mitochondrial release factor family. As to quaternary structure, interacts with the ribosome. Interacts with ribosomal protein L11. Recruited to stalled E.coli ribosomes by E.coli ArfA.

The protein localises to the cytoplasm. Functionally, peptide chain release factor 2 directs the termination of translation in response to the peptide chain termination codons UGA and UAA. In endogenous ribosomes interacts with P-site tRNA and 23S rRNA. In the presence of truncated mRNA in the 70S ribosome, ArfA and RF2 interact such that the GGQ peptide hydrolysis motif of RF2 rises into the peptidyl-transferase center and releases the ribosome. Recruited to stalled E.coli 70S ribosomes by E.coli ArfA, but cannot be functionally accomodated in the peptidyl-transferase center. Note T.thermophilus probably does not encode arfA. The protein is Peptide chain release factor RF2 (prfB) of Thermus thermophilus (strain ATCC 27634 / DSM 579 / HB8).